Reading from the N-terminus, the 188-residue chain is Probable RNA 2'-phosphotransferase (188 aa).

This sequence belongs to the KptA/TPT1 family.

Removes the 2'-phosphate from RNA via an intermediate in which the phosphate is ADP-ribosylated by NAD followed by a presumed transesterification to release the RNA and generate ADP-ribose 1''-2''-cyclic phosphate (APPR&gt;P). May function as an ADP-ribosylase. The polypeptide is Probable RNA 2'-phosphotransferase (Pseudomonas savastanoi pv. phaseolicola (strain 1448A / Race 6) (Pseudomonas syringae pv. phaseolicola (strain 1448A / Race 6))).